We begin with the raw amino-acid sequence, 644 residues long: Chaperone protein DnaK (644 aa).

Threonine 200 carries the post-translational modification Phosphothreonine; by autocatalysis. The disordered stretch occupies residues 603 to 644 (VMAAEQAKSGGAAPGAAPGGAQQAAPDADVVDADFKEVDDKK). Over residues 612–630 (GGAAPGAAPGGAQQAAPDA) the composition is skewed to low complexity. Residues 635–644 (ADFKEVDDKK) show a composition bias toward basic and acidic residues.

The protein belongs to the heat shock protein 70 family.

Functionally, acts as a chaperone. This is Chaperone protein DnaK from Polynucleobacter asymbioticus (strain DSM 18221 / CIP 109841 / QLW-P1DMWA-1) (Polynucleobacter necessarius subsp. asymbioticus).